We begin with the raw amino-acid sequence, 215 residues long: MOB kinase activator-like 1A (215 aa).

The disordered stretch occupies residues 1–27 (MSLFGLGRNQKTFRPKKSAPSGSKGAQ). Residues Cys79, Cys84, His161, and His166 each coordinate Zn(2+).

The protein belongs to the MOB1/phocein family. In terms of assembly, interacts with SIK1 at the plasma membrane and in the nucleus. In terms of tissue distribution, constitutively expressed. In 3- to 4-day-old seedlings, expression is high in the shoot apical meristem and along the vasculature in cotyledons, hypocotyls and roots. At the root tip, expression is detected in columella and lateral root cap cells as well as in the stem cell niche around the quiescent center (QC). The levels of expression decrease progressively in the meristematic zone from the root tip towards the base of the root, becoming stronger again in the elongation zone. In flowers, expression appears localized in ovules and pollen.

The protein localises to the nucleus. It is found in the cell membrane. It localises to the vacuole membrane. Functionally, plays a key role in regulation of cell expansion and cell division. Required for proper plant development, the correct patterning of the root meristem and the control of root growth. Involved in both sporogenesis and gametogenesis. This is MOB kinase activator-like 1A from Arabidopsis thaliana (Mouse-ear cress).